Consider the following 44-residue polypeptide: Phosphatase RapE inhibitor (44 aa).

Propeptides lie at residues 1–30 and 36–44; these read MKSKLFISLSAVLIGLAFFGSMYNGEMKEA and LAPTHEFLV.

Belongs to the Phr family. In terms of processing, contains a predicted signal peptide cleavage site in the N-terminal region, however the propeptide is probably only subject to processing events at the ends of the mature peptide.

The protein localises to the secreted. Its subcellular location is the cytoplasm. In terms of biological role, signaling molecule involved in the regulation of sporulation. Secreted during production, but the mature peptide acts intracellularly, indicating that it needs to be imported into the cell to function. Inhibitor of the RapE phosphatase activity. Does not inhibit the phosphatase activity of RapA and RapB. Probably plays a dispensable role in the overall context of sporulation initiation. The chain is Phosphatase RapE inhibitor (phrE) from Bacillus subtilis (strain 168).